The primary structure comprises 715 residues: Fatty acid oxidation complex subunit alpha (715 aa).

The interval 1-190 (MIYEGKAITV…KVGAVDAVVA (190 aa)) is enoyl-CoA hydratase/isomerase. A substrate-binding site is contributed by Asp-297. Residues 312–715 (HDVKQAAVLG…MAKNGQRFFN (404 aa)) are 3-hydroxyacyl-CoA dehydrogenase. Residues Met-325, Asp-344, 401 to 403 (VVE), Lys-408, and Ser-430 each bind NAD(+). The active-site For 3-hydroxyacyl-CoA dehydrogenase activity is the His-451. Asn-454 serves as a coordination point for NAD(+). Substrate is bound by residues Asn-501 and Tyr-660.

It in the N-terminal section; belongs to the enoyl-CoA hydratase/isomerase family. This sequence in the C-terminal section; belongs to the 3-hydroxyacyl-CoA dehydrogenase family. As to quaternary structure, heterotetramer of two alpha chains (FadB) and two beta chains (FadA).

The enzyme catalyses a (3S)-3-hydroxyacyl-CoA + NAD(+) = a 3-oxoacyl-CoA + NADH + H(+). It carries out the reaction a (3S)-3-hydroxyacyl-CoA = a (2E)-enoyl-CoA + H2O. It catalyses the reaction a 4-saturated-(3S)-3-hydroxyacyl-CoA = a (3E)-enoyl-CoA + H2O. The catalysed reaction is (3S)-3-hydroxybutanoyl-CoA = (3R)-3-hydroxybutanoyl-CoA. The enzyme catalyses a (3Z)-enoyl-CoA = a 4-saturated (2E)-enoyl-CoA. It carries out the reaction a (3E)-enoyl-CoA = a 4-saturated (2E)-enoyl-CoA. It participates in lipid metabolism; fatty acid beta-oxidation. Involved in the aerobic and anaerobic degradation of long-chain fatty acids via beta-oxidation cycle. Catalyzes the formation of 3-oxoacyl-CoA from enoyl-CoA via L-3-hydroxyacyl-CoA. It can also use D-3-hydroxyacyl-CoA and cis-3-enoyl-CoA as substrate. This is Fatty acid oxidation complex subunit alpha from Pseudomonas putida (Arthrobacter siderocapsulatus).